Reading from the N-terminus, the 303-residue chain is Porphobilinogen deaminase (303 aa).

Cys241 is subject to S-(dipyrrolylmethanemethyl)cysteine.

It belongs to the HMBS family. Monomer. Requires dipyrromethane as cofactor.

The enzyme catalyses 4 porphobilinogen + H2O = hydroxymethylbilane + 4 NH4(+). It participates in porphyrin-containing compound metabolism; protoporphyrin-IX biosynthesis; coproporphyrinogen-III from 5-aminolevulinate: step 2/4. It functions in the pathway porphyrin-containing compound metabolism; chlorophyll biosynthesis. Functionally, tetrapolymerization of the monopyrrole PBG into the hydroxymethylbilane pre-uroporphyrinogen in several discrete steps. In Roseiflexus sp. (strain RS-1), this protein is Porphobilinogen deaminase.